We begin with the raw amino-acid sequence, 180 residues long: Shikimate kinase (180 aa).

14–19 (GAGKTC) is an ATP binding site. T18 contributes to the Mg(2+) binding site. Positions 36, 60, and 82 each coordinate substrate. R120 contributes to the ATP binding site. R139 contacts substrate.

The protein belongs to the shikimate kinase family. Monomer. Requires Mg(2+) as cofactor.

It is found in the cytoplasm. It catalyses the reaction shikimate + ATP = 3-phosphoshikimate + ADP + H(+). It participates in metabolic intermediate biosynthesis; chorismate biosynthesis; chorismate from D-erythrose 4-phosphate and phosphoenolpyruvate: step 5/7. In terms of biological role, catalyzes the specific phosphorylation of the 3-hydroxyl group of shikimic acid using ATP as a cosubstrate. In Stenotrophomonas maltophilia (strain R551-3), this protein is Shikimate kinase.